We begin with the raw amino-acid sequence, 208 residues long: FMN-dependent NADH:quinone oxidoreductase (208 aa).

Residues 17-19 (SNS), 99-102 (MWNL), and 143-146 (SRGG) each bind FMN.

Belongs to the azoreductase type 1 family. As to quaternary structure, homodimer. FMN is required as a cofactor.

The catalysed reaction is 2 a quinone + NADH + H(+) = 2 a 1,4-benzosemiquinone + NAD(+). It catalyses the reaction N,N-dimethyl-1,4-phenylenediamine + anthranilate + 2 NAD(+) = 2-(4-dimethylaminophenyl)diazenylbenzoate + 2 NADH + 2 H(+). Its function is as follows. Quinone reductase that provides resistance to thiol-specific stress caused by electrophilic quinones. Functionally, also exhibits azoreductase activity. Catalyzes the reductive cleavage of the azo bond in aromatic azo compounds to the corresponding amines. In Staphylococcus aureus (strain MSSA476), this protein is FMN-dependent NADH:quinone oxidoreductase.